The primary structure comprises 157 residues: Protein Smg (157 aa).

This sequence belongs to the Smg family.

The protein is Protein Smg of Salmonella agona (strain SL483).